The sequence spans 390 residues: Ketoisovalerate reductase BEA2 (390 aa).

An NADP(+)-binding site is contributed by 70–75; it reads GPGNIG. The Proton donor role is filled by Lys285. Asn289 and Asn293 together coordinate substrate.

Belongs to the ketopantoate reductase family.

The catalysed reaction is (R)-2-hydroxy-3-methylbutanoate + NADP(+) = 3-methyl-2-oxobutanoate + NADPH + H(+). The reductase activity is increased by Mg(2+) (195%), Ca(2+) (169%) and slightly increased by K(+) (123%). The reduction activity is inhibited by Fe(2+) and Co(2+), and almost totally inhibited by Cu(2+), Mn(2+), Zn(2+) and Fe(3+) (from 3% to 9% residual activity respectively). The chelating agent EDTA had little effect, suggesting Mg(2+) and Ca(2+) are not determining factors, though they could promote the reductase enzyme activity. Functionally, ketoisovalerate reductase; part of the gene cluster that mediates the biosynthesis of beauvericin (BEA), a non-ribosomal cyclic hexadepsipeptide that shows antibiotic, antifungal, insecticidal, and cancer cell antiproliferative and antihaptotactic activity. Ketoisovalerate reductase BEA2 catalyzes the NADPH-specific reduction of ketoisovaleric acid to hydroxyisovalerate, a precursor for beauvericin biosynthesis. The nonribosomal cyclodepsipeptide synthetase BEA1 then catalyzes the formation of beauvericin via condensation and cyclization of 3 dipeptidol monomers, each composed of one unit of hydroxyisovalerate and one unit of N-methyl-phenylalanine. This is Ketoisovalerate reductase BEA2 from Gibberella intermedia (Bulb rot disease fungus).